Here is a 417-residue protein sequence, read N- to C-terminus: Serine hydroxymethyltransferase 1 (417 aa).

(6S)-5,6,7,8-tetrahydrofolate-binding positions include leucine 121 and 125–127 (GHL). Position 230 is an N6-(pyridoxal phosphate)lysine (lysine 230). Residue 355–357 (SPF) coordinates (6S)-5,6,7,8-tetrahydrofolate.

This sequence belongs to the SHMT family. As to quaternary structure, homodimer. Pyridoxal 5'-phosphate serves as cofactor.

It is found in the cytoplasm. It catalyses the reaction (6R)-5,10-methylene-5,6,7,8-tetrahydrofolate + glycine + H2O = (6S)-5,6,7,8-tetrahydrofolate + L-serine. It participates in one-carbon metabolism; tetrahydrofolate interconversion. Its pathway is amino-acid biosynthesis; glycine biosynthesis; glycine from L-serine: step 1/1. Functionally, catalyzes the reversible interconversion of serine and glycine with tetrahydrofolate (THF) serving as the one-carbon carrier. This reaction serves as the major source of one-carbon groups required for the biosynthesis of purines, thymidylate, methionine, and other important biomolecules. Also exhibits THF-independent aldolase activity toward beta-hydroxyamino acids, producing glycine and aldehydes, via a retro-aldol mechanism. The protein is Serine hydroxymethyltransferase 1 of Pseudomonas putida (strain ATCC 47054 / DSM 6125 / CFBP 8728 / NCIMB 11950 / KT2440).